The chain runs to 334 residues: Atypical chemokine receptor 1 (334 aa).

The Extracellular portion of the chain corresponds to 1–61 (MGNCLYPVET…CNLLDRSSLP (61 aa)). 3 N-linked (GlcNAc...) asparagine glycosylation sites follow: Asn16, Asn26, and Asn32. 2 cysteine pairs are disulfide-bonded: Cys49–Cys274 and Cys127–Cys193. Residues 62–82 (FFMLTSVLGMLASGSILFAIL) form a helical membrane-spanning segment. Residues 83-93 (RPFFHWQICPS) lie on the Cytoplasmic side of the membrane. The helical transmembrane segment at 94–114 (WPILAELAVGSALFSIAVPIL) threads the bilayer. Over 115–127 (APGLHSAHSTALC) the chain is Extracellular. Residues 128–151 (NLGYWVWYTSAFAQALLIGCYACL) traverse the membrane as a helical segment. Over 152 to 164 (NPRLNIGQLRGFT) the chain is Cytoplasmic. Residues 165–185 (LGLSVGLWGAAALSGLPVALA) form a helical membrane-spanning segment. The Extracellular segment spans residues 186-205 (SDVYNGFCTFPSSRDMEALK). The chain crosses the membrane as a helical span at residues 206-226 (YTHYAICFTIFTVLPLTLLAA). The Cytoplasmic segment spans residues 227–242 (KGLKIALSKGPGPWVS). Residues 243-263 (VLWIWFIFWWPHGMVLIFDAL) traverse the membrane as a helical segment. Over 264 to 285 (VRSKTVLLYTCQSQKILDAMLN) the chain is Extracellular. An N-linked (GlcNAc...) asparagine glycan is attached at Asn285. A helical membrane pass occupies residues 286–306 (VTEALSMLHCVATPLLLALFC). Topologically, residues 307-334 (HQTTRRSLSSLSLPTRQASQMDALAGKS) are cytoplasmic.

This sequence belongs to the G-protein coupled receptor 1 family. Atypical chemokine receptor subfamily. Expressed in liver and brain.

Its subcellular location is the early endosome. The protein localises to the recycling endosome. It localises to the membrane. Its function is as follows. Atypical chemokine receptor that controls chemokine levels and localization via high-affinity chemokine binding that is uncoupled from classic ligand-driven signal transduction cascades, resulting instead in chemokine sequestration, degradation, or transcytosis. Also known as interceptor (internalizing receptor) or chemokine-scavenging receptor or chemokine decoy receptor. Has a promiscuous chemokine-binding profile, interacting with inflammatory chemokines of both the CXC and the CC subfamilies but not with homeostatic chemokines. Acts as a receptor for chemokines including CCL2, CCL5, CCL7, CCL11, CCL13, CCL14, CCL17, CXCL5, CXCL6, IL8/CXCL8, CXCL11, GRO, RANTES, MCP-1 and TARC. May regulate chemokine bioavailability and, consequently, leukocyte recruitment through two distinct mechanisms: when expressed in endothelial cells, it sustains the abluminal to luminal transcytosis of tissue-derived chemokines and their subsequent presentation to circulating leukocytes; when expressed in erythrocytes, serves as blood reservoir of cognate chemokines but also as a chemokine sink, buffering potential surges in plasma chemokine levels. In terms of biological role, (Microbial infection) Acts as a receptor for the malaria parasite Plasmodium yoelii in mature erythrocytes but not reticulocytes. This chain is Atypical chemokine receptor 1 (Ackr1), found in Mus musculus (Mouse).